The following is a 530-amino-acid chain: Putative ABC transporter ATP-binding protein SSO2030 (530 aa).

ABC transporter domains are found at residues 6-243 (IRDL…LGLE) and 282-516 (ALYA…EPPL). ATP is bound by residues 38–45 (GRSGSGKS) and 314–321 (GKNGSGKT).

This sequence belongs to the ABC transporter superfamily.

The protein localises to the cell membrane. Its function is as follows. Probably part of an ABC transporter complex. Responsible for energy coupling to the transport system. The polypeptide is Putative ABC transporter ATP-binding protein SSO2030 (Saccharolobus solfataricus (strain ATCC 35092 / DSM 1617 / JCM 11322 / P2) (Sulfolobus solfataricus)).